The sequence spans 129 residues: Lysozyme C-2 (129 aa).

Residues 1–129 (KVFERCELAR…VSSYVEGCTL (129 aa)) form the C-type lysozyme domain. 4 disulfides stabilise this stretch: Cys6–Cys127, Cys30–Cys115, Cys65–Cys81, and Cys77–Cys95. Residues Glu35 and Asp53 contribute to the active site.

This sequence belongs to the glycosyl hydrolase 22 family. Monomer.

It catalyses the reaction Hydrolysis of (1-&gt;4)-beta-linkages between N-acetylmuramic acid and N-acetyl-D-glucosamine residues in a peptidoglycan and between N-acetyl-D-glucosamine residues in chitodextrins.. In terms of biological role, lysozymes have primarily a bacteriolytic function; those in tissues and body fluids are associated with the monocyte-macrophage system and enhance the activity of immunoagents. In Capra hircus (Goat), this protein is Lysozyme C-2.